The following is a 122-amino-acid chain: MGQSVSAIRRVSRLRRHARLRKRIAGTQQRPRLVVHRSARHIHVQLVNDANGTTVAAASSIETDVRGLDGDKKARSVRVGQLIAERAKAADIDTVVFDRGGYTYGGRIAALADAARENGLKF.

It belongs to the universal ribosomal protein uL18 family. Part of the 50S ribosomal subunit; part of the 5S rRNA/L5/L18/L25 subcomplex. Contacts the 5S and 23S rRNAs.

Its function is as follows. This is one of the proteins that bind and probably mediate the attachment of the 5S RNA into the large ribosomal subunit, where it forms part of the central protuberance. This Mycobacterium ulcerans (strain Agy99) protein is Large ribosomal subunit protein uL18.